The sequence spans 442 residues: C4-dicarboxylate transport protein (442 aa).

The next 8 helical transmembrane spans lie at 10 to 30 (VQVLIAIALGILTGFLFPSLG), 40 to 60 (FIKLIKMIIAPIIFATVVSGI), 77 to 97 (LLYFELVTTFALVIGLVIVNI), 144 to 164 (FTQGDLLQVLLVAVLFGFALL), 183 to 203 (VIFVILGFVMRLAPIGAFGAM), 221 to 241 (LMITFYATCALFIFGVLGLIA), 331 to 351 (LLGVLLLTSKGAAGVTGSGFI), and 354 to 374 (AATLSAVGDVPVAGLALILGI). The interval 418–442 (LPTIEPDVHSEERGEGRELDSLRPA) is disordered. Residues 423–442 (PDVHSEERGEGRELDSLRPA) show a composition bias toward basic and acidic residues.

The protein belongs to the dicarboxylate/amino acid:cation symporter (DAACS) (TC 2.A.23) family.

Its subcellular location is the cell membrane. Responsible for the transport of dicarboxylates such as succinate, fumarate, and malate across the membrane. In Deinococcus deserti (strain DSM 17065 / CIP 109153 / LMG 22923 / VCD115), this protein is C4-dicarboxylate transport protein.